The sequence spans 420 residues: Isocitrate dehydrogenase [NADP] (420 aa).

NADP(+)-binding positions include 75-77 and Arg-82; that span reads TIT. Thr-77 is a binding site for substrate. Substrate is bound by residues 94–100, Arg-109, and Arg-132; that span reads SPNGTIR. Asp-252 serves as a coordination point for Mn(2+). Lys-260 is a binding site for NADP(+). Asp-275 is a Mn(2+) binding site. Residues 310–315 and Asn-328 contribute to the NADP(+) site; that span reads GTVTRH.

The protein belongs to the isocitrate and isopropylmalate dehydrogenases family. It depends on Mg(2+) as a cofactor. Mn(2+) is required as a cofactor.

The enzyme catalyses D-threo-isocitrate + NADP(+) = 2-oxoglutarate + CO2 + NADPH. In terms of biological role, may function in the production of NADPH for fatty acid and sterol synthesis. The sequence is that of Isocitrate dehydrogenase [NADP] (IDP3) from Saccharomyces cerevisiae (strain ATCC 204508 / S288c) (Baker's yeast).